A 519-amino-acid chain; its full sequence is Cytochrome P450 88A1 (519 aa).

A helical transmembrane segment spans residues 1–21 (MLGVGMAAAVLLGAVALLLAD). Cys-466 lines the heme pocket.

Belongs to the cytochrome P450 family. The cofactor is heme. In terms of tissue distribution, expressed in roots, developing leaves, the vegetative meristem, and suspension culture cells.

Its subcellular location is the membrane. The protein operates within plant hormone biosynthesis; gibberellin biosynthesis. The polypeptide is Cytochrome P450 88A1 (CYP88A1) (Zea mays (Maize)).